The sequence spans 46 residues: Escargot/snail protein homolog (46 aa).

3 C2H2-type zinc fingers span residues 1–4 (IRTH), 8–30 (CKCP…TTHH), and 36–46 (FSCQHCNRAFA).

The protein belongs to the snail C2H2-type zinc-finger protein family.

It localises to the nucleus. The polypeptide is Escargot/snail protein homolog (Oryzias latipes (Japanese rice fish)).